Reading from the N-terminus, the 431-residue chain is Glutamate-1-semialdehyde 2,1-aminomutase (431 aa).

Lysine 269 is subject to N6-(pyridoxal phosphate)lysine.

It belongs to the class-III pyridoxal-phosphate-dependent aminotransferase family. HemL subfamily. As to quaternary structure, homodimer. It depends on pyridoxal 5'-phosphate as a cofactor.

The protein localises to the cytoplasm. The enzyme catalyses (S)-4-amino-5-oxopentanoate = 5-aminolevulinate. The protein operates within porphyrin-containing compound metabolism; protoporphyrin-IX biosynthesis; 5-aminolevulinate from L-glutamyl-tRNA(Glu): step 2/2. It functions in the pathway porphyrin-containing compound metabolism; chlorophyll biosynthesis. This Pelodictyon phaeoclathratiforme (strain DSM 5477 / BU-1) protein is Glutamate-1-semialdehyde 2,1-aminomutase.